Consider the following 332-residue polypeptide: Ferredoxin--NADP reductase (332 aa).

FAD is bound by residues E35, Q43, Y48, V88, F122, D286, and S326.

It belongs to the ferredoxin--NADP reductase type 2 family. As to quaternary structure, homodimer. Requires FAD as cofactor.

The catalysed reaction is 2 reduced [2Fe-2S]-[ferredoxin] + NADP(+) + H(+) = 2 oxidized [2Fe-2S]-[ferredoxin] + NADPH. The sequence is that of Ferredoxin--NADP reductase from Limosilactobacillus reuteri (strain DSM 20016) (Lactobacillus reuteri).